Here is a 349-residue protein sequence, read N- to C-terminus: Phenylalanine--tRNA ligase alpha subunit (349 aa).

E259 contacts Mg(2+).

The protein belongs to the class-II aminoacyl-tRNA synthetase family. Phe-tRNA synthetase alpha subunit type 1 subfamily. As to quaternary structure, tetramer of two alpha and two beta subunits. Requires Mg(2+) as cofactor.

It localises to the cytoplasm. It carries out the reaction tRNA(Phe) + L-phenylalanine + ATP = L-phenylalanyl-tRNA(Phe) + AMP + diphosphate + H(+). The protein is Phenylalanine--tRNA ligase alpha subunit of Lactobacillus helveticus (strain DPC 4571).